The following is a 452-amino-acid chain: Deoxybrevianamide E synthase notF (452 aa).

A compositionally biased stretch (basic and acidic residues) spans methionine 1–lysine 19. Residues methionine 1–leucine 38 are disordered. The segment covering proline 21–leucine 38 has biased composition (low complexity). A brevianamide F-binding site is contributed by glutamate 108. Residues arginine 122, lysine 212, tyrosine 214, lysine 282, tyrosine 284, tyrosine 371, tyrosine 436, and tyrosine 440 each coordinate dimethylallyl diphosphate.

Belongs to the tryptophan dimethylallyltransferase family. Monomer.

The catalysed reaction is brevianamide F + dimethylallyl diphosphate = deoxybrevianamide E + diphosphate. The protein operates within alkaloid biosynthesis. Its activity is regulated as follows. Addition of 5 mM Mg(2+), Ca(2+) or Mn(2+) slightly enhances catalysis (about 100-120%). Significant reduction of enzyme activity (2%-35%) is observed with Cu(2+), Zn(2+), Fe(2+), or Sn(2+) (5 mM). In terms of biological role, deoxybrevianamide E synthase; part of the gene cluster that mediates the biosynthesis of notoamide, a fungal indole alkaloid that belongs to a family of natural products containing a characteristic bicyclo[2.2.2]diazaoctane core. The first step of notoamide biosynthesis involves coupling of L-proline and L-tryptophan by the bimodular NRPS notE, to produce cyclo-L-tryptophan-L-proline called brevianamide F. The reverse prenyltransferase notF then acts as a deoxybrevianamide E synthase and converts brevianamide F to deoxybrevianamide E via reverse prenylation at C-2 of the indole ring leading to the bicyclo[2.2.2]diazaoctane core. Deoxybrevianamide E is further hydroxylated at C-6 of the indole ring, likely catalyzed by the cytochrome P450 monooxygenase notG, to yield 6-hydroxy-deoxybrevianamide E. 6-hydroxy-deoxybrevianamide E is a specific substrate of the prenyltransferase notC for normal prenylation at C-7 to produce 6-hydroxy-7-prenyl-deoxybrevianamide, also called notoamide S. As the proposed pivotal branching point in notoamide biosynthesis, notoamide S can be diverted to notoamide E through an oxidative pyran ring closure putatively catalyzed by either notH cytochrome P450 monooxygenase or the notD FAD-linked oxidoreductase. This step would be followed by an indole 2,3-epoxidation-initiated pinacol-like rearrangement catalyzed by the notB FAD-dependent monooxygenase leading to the formation of notoamide C and notoamide D. On the other hand notoamide S is converted to notoamide T by notH (or notD), a bifunctional oxidase that also functions as the intramolecular Diels-Alderase responsible for generation of (+)-notoamide T. To generate antipodal (-)-notoaminide T, notH' (or notD') in Aspergillus versicolor is expected to catalyze a Diels-Alder reaction leading to the opposite stereochemistry. The remaining oxidoreductase notD (or notH) likely catalyzes the oxidative pyran ring formation to yield (+)-stephacidin A. The FAD-dependent monooxygenase notI is highly similar to notB and is predicted to catalyze a similar conversion from (+)-stephacidin A to (-)-notoamide B via the 2,3-epoxidation of (+)-stephacidin A followed by a pinacol-type rearrangement. Finally, it remains unclear which enzyme could be responsible for the final hydroxylation steps leading to notoamide A and sclerotiamide. In Aspergillus sp. (strain MF297-2), this protein is Deoxybrevianamide E synthase notF.